Here is a 327-residue protein sequence, read N- to C-terminus: Probable cell division protein WhiA (327 aa).

The H-T-H motif DNA-binding region spans 275–308 (SLEELGRLADPVMTKDAVAGRIRRLLSMADRKAK). The tract at residues 307 to 327 (AKTEGIPDTESAVTPELLEEA) is disordered.

Belongs to the WhiA family.

Its function is as follows. Involved in cell division and chromosome segregation. This chain is Probable cell division protein WhiA, found in Mycobacteroides abscessus (strain ATCC 19977 / DSM 44196 / CCUG 20993 / CIP 104536 / JCM 13569 / NCTC 13031 / TMC 1543 / L948) (Mycobacterium abscessus).